We begin with the raw amino-acid sequence, 365 residues long: Methylthioribose-1-phosphate isomerase (365 aa).

D255 functions as the Proton donor in the catalytic mechanism.

It belongs to the eIF-2B alpha/beta/delta subunits family. MtnA subfamily.

It localises to the cytoplasm. The protein resides in the nucleus. It catalyses the reaction 5-(methylsulfanyl)-alpha-D-ribose 1-phosphate = 5-(methylsulfanyl)-D-ribulose 1-phosphate. Its pathway is amino-acid biosynthesis; L-methionine biosynthesis via salvage pathway; L-methionine from S-methyl-5-thio-alpha-D-ribose 1-phosphate: step 1/6. Its function is as follows. Catalyzes the interconversion of methylthioribose-1-phosphate (MTR-1-P) into methylthioribulose-1-phosphate (MTRu-1-P). In Drosophila willistoni (Fruit fly), this protein is Methylthioribose-1-phosphate isomerase.